Reading from the N-terminus, the 550-residue chain is Methionine--tRNA ligase (550 aa).

The 'HIGH' region signature appears at 14–24; sequence PYANGSLHIGH. Zn(2+) is bound by residues Cys-145, Cys-148, Cys-158, and Cys-161. Residues 331-335 carry the 'KMSKS' region motif; sequence KMSKS. Position 334 (Lys-334) interacts with ATP.

This sequence belongs to the class-I aminoacyl-tRNA synthetase family. MetG type 1 subfamily. As to quaternary structure, monomer. Zn(2+) serves as cofactor.

It is found in the cytoplasm. The enzyme catalyses tRNA(Met) + L-methionine + ATP = L-methionyl-tRNA(Met) + AMP + diphosphate. Is required not only for elongation of protein synthesis but also for the initiation of all mRNA translation through initiator tRNA(fMet) aminoacylation. This Wigglesworthia glossinidia brevipalpis protein is Methionine--tRNA ligase.